A 149-amino-acid polypeptide reads, in one-letter code: Transthyretin (149 aa).

Positions 1-22 (MAFHSLLLLCLAGLAFVSETAA) are cleaved as a signal peptide. Cys-32 carries the sulfocysteine modification. Lys-37 is a binding site for L-thyroxine. A 4-carboxyglutamate modification is found at Glu-64. L-thyroxine is bound by residues Glu-76 and Ser-139.

The protein belongs to the transthyretin family. In terms of assembly, homotetramer. Dimer of dimers. In the homotetramer, subunits assemble around a central channel that can accommodate two ligand molecules. Interacts with RBP4. Sulfonation of the reactive cysteine Cys-32 enhances the stability of the native conformation of TTR, avoiding misassembly of the protein leading to amyloid formation. Detected in liver.

It is found in the secreted. In terms of biological role, thyroid hormone-binding protein. Probably transports thyroxine from the bloodstream to the brain. This is Transthyretin (TTR) from Macropus giganteus (Eastern gray kangaroo).